Reading from the N-terminus, the 2327-residue chain is Nonribosomal peptide synthetase apmB (2327 aa).

The segment at 214-605 (DTQAKSRPDS…GRKDMQIKLR (392 aa)) is adenylation 1. The Carrier 1 domain occupies 734-810 (EPATATGKVL…EMADACTKVI (77 aa)). O-(pantetheine 4'-phosphoryl)serine is present on S771. Residues 845 to 1259 (EDLYPCTAMQ…IFISSKDQES (415 aa)) are condensation 1. Residues 1281-1675 (ERIAERPDHE…RRKDTQVKLR (395 aa)) form an adenylation 2 region. The Carrier 2 domain occupies 1816–1892 (PPTTDMQITM…AISAVAETLS (77 aa)). At S1853 the chain carries O-(pantetheine 4'-phosphoryl)serine. The condensation 2 stretch occupies residues 1937–2260 (TDFQSLAING…VFQYQDFGGE (324 aa)). A disordered region spans residues 2299–2327 (RVDLPRRPSPAGDTRDGPTAASDSPSRAR).

The protein belongs to the NRP synthetase family.

The enzyme catalyses N-benzoyl-L-phenylalaninol + benzoate + L-phenylalanine + 2 ATP = asperphenamate + 2 AMP + 2 diphosphate + H(+). Its pathway is secondary metabolite biosynthesis. Functionally, nonribosomal peptide synthetase; part of the gene cluster that mediates the biosynthesis of asperphenamate, a rare linear amino acid ester that exhibits antitumor activity towards a number of cell lines. The structure of asperphenamate contains two subunits, N-benzoylphenylalanine and N-benzoylphenylalaninol, which are connected by an inter-molecular ester bond. The first step of asperphenamate biosynthesis is the generation of N-benzoylphenylalaninol by the nonribosomal peptide synthase apmA. Using phenylalanine and benzoic acid as substrates, apmA catalyzes amide bond formation and tethers the intermediate into the NRPS chain. Then, the terminal R domain of apmA catalyzes the reduction reaction to get the shunt product N-benzoylphenylalaninol. Subsequently, the nonribosomal peptide synthase apmB activates the same substrates as does apmA (phenylalanine and benzoic acid) to produce N-benzoylphenylalanine before condensing N-benzoylphenylalanine and N-benzoylphenylalaninol to release asperphenamate. This chain is Nonribosomal peptide synthetase apmB, found in Penicillium brevicompactum.